The following is a 241-amino-acid chain: Sec-independent protein translocase protein TatC (241 aa).

6 helical membrane-spanning segments follow: residues 27–47, 76–96, 122–142, 161–181, 193–213, and 217–237; these read LIIV…FSAG, LTMC…YEAF, FVAG…SIVI, IVTN…IIVL, LVKG…FFSP, and LFSQ…SMVL.

This sequence belongs to the TatC family. As to quaternary structure, forms a complex with TatA.

It is found in the cell membrane. Part of the twin-arginine translocation (Tat) system that transports large folded proteins containing a characteristic twin-arginine motif in their signal peptide across membranes. This Methanocella arvoryzae (strain DSM 22066 / NBRC 105507 / MRE50) protein is Sec-independent protein translocase protein TatC.